The following is a 176-amino-acid chain: MGKQLKDDFFALFGLPVQYGVDEAALDAAYRTVQSQAHPDRFAKAGDAERRVAMQWAAHANEAYRTLRQPLRRATYLLKLRGVDVQAENNTAMTPAFLMQQMEWREALQEAVEERAVDRLDALLRELRQEKRERHAALGALLDAGDNEAAGGAVRQLMFIEKIEHDTSEAIDRLED.

The J domain occupies 8-80; it reads DFFALFGLPV…LRRATYLLKL (73 aa).

Belongs to the HscB family. Interacts with HscA and stimulates its ATPase activity.

Co-chaperone involved in the maturation of iron-sulfur cluster-containing proteins. Seems to help targeting proteins to be folded toward HscA. This Cupriavidus taiwanensis (strain DSM 17343 / BCRC 17206 / CCUG 44338 / CIP 107171 / LMG 19424 / R1) (Ralstonia taiwanensis (strain LMG 19424)) protein is Co-chaperone protein HscB homolog.